We begin with the raw amino-acid sequence, 65 residues long: Metallothionein-like protein 3B (65 aa).

This sequence belongs to the metallothionein superfamily. Type 15 family.

Its function is as follows. Metallothioneins have a high content of cysteine residues that bind various heavy metals. The protein is Metallothionein-like protein 3B (MT3B) of Oryza sativa subsp. indica (Rice).